The sequence spans 177 residues: Alpha-crystallin B chain (177 aa).

Position 1 is an N-acetylmethionine (methionine 1). Residues 58 to 166 enclose the sHSP domain; that stretch reads RMPSWAQTGL…PERSVPISRD (109 aa). Zn(2+) is bound by residues histidine 85, histidine 106, glutamate 108, histidine 113, and histidine 121. The segment covering 155–169 has biased composition (basic and acidic residues); the sequence is DVPERSVPISRDEKP. Residues 155-177 form a disordered region; the sequence is DVPERSVPISRDEKPAVAGPQQK.

It belongs to the small heat shock protein (HSP20) family. As to quaternary structure, heteromer composed of three CRYAA and one CRYAB subunits. Aggregates with homologous proteins, including the small heat shock protein HSPB1, to form large heteromeric complexes. Inter-subunit bridging via zinc ions enhances stability, which is crucial as there is no protein turn over in the lens. Interacts with HSPBAP1 and TTN/titin.

May contribute to the transparency and refractive index of the lens. This is Alpha-crystallin B chain (CRYAB) from Squalus acanthias (Spiny dogfish).